A 248-amino-acid chain; its full sequence is MLLIPAIDLKDGQCVRLKQGDMDQATVFSEDPAAMARHWVEQGARRLHLVDLNGAFVGKPRNEEAIKAIIAEVGDEIPVQLGGGIRDLNTIERWLDDGLSYVIIGTAAVKNPGFLKDACSAFGGHIIVGLDARDGKVATDGWSKLTGHEVADLARKYEDYGVEAIIYTDIGRDGMLQGINIDATVKLAQSMSIPVIASGGLSNLADIDNLCAVEGEGVEGVICGRAIYSGDLNFAAAQALADKLRDGQ.

The active-site Proton acceptor is the Asp8. Catalysis depends on Asp131, which acts as the Proton donor.

This sequence belongs to the HisA/HisF family.

The protein localises to the cytoplasm. The catalysed reaction is 1-(5-phospho-beta-D-ribosyl)-5-[(5-phospho-beta-D-ribosylamino)methylideneamino]imidazole-4-carboxamide = 5-[(5-phospho-1-deoxy-D-ribulos-1-ylimino)methylamino]-1-(5-phospho-beta-D-ribosyl)imidazole-4-carboxamide. Its pathway is amino-acid biosynthesis; L-histidine biosynthesis; L-histidine from 5-phospho-alpha-D-ribose 1-diphosphate: step 4/9. In Cupriavidus necator (strain ATCC 17699 / DSM 428 / KCTC 22496 / NCIMB 10442 / H16 / Stanier 337) (Ralstonia eutropha), this protein is 1-(5-phosphoribosyl)-5-[(5-phosphoribosylamino)methylideneamino] imidazole-4-carboxamide isomerase.